Here is a 625-residue protein sequence, read N- to C-terminus: Glutamine--fructose-6-phosphate aminotransferase [isomerizing] (625 aa).

Cys2 acts as the Nucleophile; for GATase activity in catalysis. Positions 2–229 (CGIVGFVGRT…NDQIVTITAD (228 aa)) constitute a Glutamine amidotransferase type-2 domain. 2 consecutive SIS domains span residues 296-436 (IDES…LRGN) and 470-615 (LAQD…VDQP). The active-site For Fru-6P isomerization activity is Lys620.

As to quaternary structure, homodimer.

It localises to the cytoplasm. It carries out the reaction D-fructose 6-phosphate + L-glutamine = D-glucosamine 6-phosphate + L-glutamate. Functionally, catalyzes the first step in hexosamine metabolism, converting fructose-6P into glucosamine-6P using glutamine as a nitrogen source. This chain is Glutamine--fructose-6-phosphate aminotransferase [isomerizing], found in Corynebacterium diphtheriae (strain ATCC 700971 / NCTC 13129 / Biotype gravis).